We begin with the raw amino-acid sequence, 766 residues long: BMP/retinoic acid-inducible neural-specific protein 3 (766 aa).

An N-terminal signal peptide occupies residues 1–33 (MIWRRRAGAELSSLMALWEWIVLSLHCWVLAVA). Residues 74 to 264 (RYKIYREFGR…FVQAALSYIA (191 aa)) form the MACPF domain. N-linked (GlcNAc...) asparagine glycans are attached at residues N168, N337, N456, N562, N609, and N641.

Belongs to the BRINP family. As to expression, expressed in the brain. Weakly expressed in embryonic stem (ES) cells. Expressed in ES-derived neural stem cells (NSCs) and neuronal cells.

The protein localises to the secreted. The protein resides in the mitochondrion. In terms of biological role, inhibits neuronal cell proliferation by negative regulation of the cell cycle transition. Promotes pituitary gonadotrope cell proliferation, migration and invasion, when overexpressed. May play a role in cell pituitary tumor development. The protein is BMP/retinoic acid-inducible neural-specific protein 3 (Brinp3) of Mus musculus (Mouse).